We begin with the raw amino-acid sequence, 104 residues long: Large ribosomal subunit protein uL24 (104 aa).

Over residues 82–92 the composition is skewed to basic and acidic residues; the sequence is RIGYRTDENGK. A disordered region spans residues 82-104; it reads RIGYRTDENGKRVRISRRNGKDI. Positions 93–104 are enriched in basic residues; the sequence is RVRISRRNGKDI.

Belongs to the universal ribosomal protein uL24 family. In terms of assembly, part of the 50S ribosomal subunit.

Its function is as follows. One of two assembly initiator proteins, it binds directly to the 5'-end of the 23S rRNA, where it nucleates assembly of the 50S subunit. Functionally, one of the proteins that surrounds the polypeptide exit tunnel on the outside of the subunit. This is Large ribosomal subunit protein uL24 from Nocardia farcinica (strain IFM 10152).